A 391-amino-acid chain; its full sequence is DNA-directed RNA polymerase I subunit RPA43 (391 aa).

Disordered stretches follow at residues 1–27 and 220–391; these read MANWTQEDGAPTPVTNPSEVSQVSGGS and QKQV…KKSK. A compositionally biased stretch (basic residues) spans 288–299; that stretch reads GRHKEKKKKKKR. Residues 289–353 adopt a coiled-coil conformation; it reads RHKEKKKKKK…RDKQQDSAEI (65 aa). Polar residues predominate over residues 312–323; it reads MNNNSLQETALD. Basic residues predominate over residues 336–345; that stretch reads KEKKKKKKRD.

The protein belongs to the eukaryotic RPA43 RNA polymerase subunit family. As to quaternary structure, component of the RNA polymerase I (Pol I) complex consisting of at least 13 subunits.

It is found in the nucleus. The protein resides in the nucleolus. Functionally, DNA-dependent RNA polymerase catalyzes the transcription of DNA into RNA using the four ribonucleoside triphosphates as substrates. Component of RNA polymerase I which synthesizes ribosomal RNA precursors. May be involved in recruitment of Pol I to rDNA promoters. In Danio rerio (Zebrafish), this protein is DNA-directed RNA polymerase I subunit RPA43.